The following is a 739-amino-acid chain: Exocyst complex component 3-like protein (739 aa).

Disordered regions lie at residues 1-21 (MDSKIQPTLRPGSSCPRPEWP) and 698-718 (AALSSLQAGPPPSPSTGRRAL). Positions 1–370 (MDSKIQPTLR…DVSQLEPLLT (370 aa)) are mediates interaction with EXOC2, EXOC4 and EXOC5.

Belongs to the SEC6 family. As to quaternary structure, interacts with EXOC2, EXOC4 and EXOC5; may be part of the exocyst. In terms of tissue distribution, ubiquitously expressed.

It is found in the cytoplasmic vesicle. It localises to the secretory vesicle. Its function is as follows. As part of the exocyst, may play a role in regulated exocytosis of insulin granules. The protein is Exocyst complex component 3-like protein (Exoc3l1) of Mus musculus (Mouse).